Here is a 432-residue protein sequence, read N- to C-terminus: Amino-acid acetyltransferase (432 aa).

An N-acetyltransferase domain is found at 286–425 (EQLREAGIED…ASLYNFQRNS (140 aa)).

The protein belongs to the acetyltransferase family. ArgA subfamily.

The protein localises to the cytoplasm. It catalyses the reaction L-glutamate + acetyl-CoA = N-acetyl-L-glutamate + CoA + H(+). It participates in amino-acid biosynthesis; L-arginine biosynthesis; N(2)-acetyl-L-ornithine from L-glutamate: step 1/4. The polypeptide is Amino-acid acetyltransferase (Pseudomonas aeruginosa (strain LESB58)).